A 253-amino-acid polypeptide reads, in one-letter code: 5-oxoprolinase subunit A (253 aa).

The protein belongs to the LamB/PxpA family. Forms a complex composed of PxpA, PxpB and PxpC.

The enzyme catalyses 5-oxo-L-proline + ATP + 2 H2O = L-glutamate + ADP + phosphate + H(+). Functionally, catalyzes the cleavage of 5-oxoproline to form L-glutamate coupled to the hydrolysis of ATP to ADP and inorganic phosphate. The protein is 5-oxoprolinase subunit A of Bacillus cereus (strain AH820).